Here is a 171-residue protein sequence, read N- to C-terminus: MNYFELFGLPIQFELDGSLLSSQFRALQKRFHPDNFATASERDRLMAVQQAAQINDAYQTLKDPLRRAEYLLSLQGIEMNAEQQTLQDPMFLMEQMELREELESVTACADPEAALVAFDTKVTAMQRHYLAQLQGQLAQSEWLAAADQIRKLKFIAKLKNEVERVEDQLLG.

Residues 2–74 (NYFELFGLPI…LRRAEYLLSL (73 aa)) enclose the J domain.

The protein belongs to the HscB family. Interacts with HscA and stimulates its ATPase activity.

In terms of biological role, co-chaperone involved in the maturation of iron-sulfur cluster-containing proteins. Seems to help targeting proteins to be folded toward HscA. This Vibrio cholerae serotype O1 (strain ATCC 39541 / Classical Ogawa 395 / O395) protein is Co-chaperone protein HscB homolog.